Reading from the N-terminus, the 426-residue chain is Serine--tRNA ligase (426 aa).

An L-serine-binding site is contributed by 233–235 (TAE). 264-266 (RSE) contributes to the ATP binding site. An L-serine-binding site is contributed by glutamate 287. 351-354 (EISS) is a binding site for ATP. Residue serine 385 participates in L-serine binding.

The protein belongs to the class-II aminoacyl-tRNA synthetase family. Type-1 seryl-tRNA synthetase subfamily. As to quaternary structure, homodimer. The tRNA molecule binds across the dimer.

The protein localises to the cytoplasm. It catalyses the reaction tRNA(Ser) + L-serine + ATP = L-seryl-tRNA(Ser) + AMP + diphosphate + H(+). The enzyme catalyses tRNA(Sec) + L-serine + ATP = L-seryl-tRNA(Sec) + AMP + diphosphate + H(+). It functions in the pathway aminoacyl-tRNA biosynthesis; selenocysteinyl-tRNA(Sec) biosynthesis; L-seryl-tRNA(Sec) from L-serine and tRNA(Sec): step 1/1. Catalyzes the attachment of serine to tRNA(Ser). Is also able to aminoacylate tRNA(Sec) with serine, to form the misacylated tRNA L-seryl-tRNA(Sec), which will be further converted into selenocysteinyl-tRNA(Sec). This chain is Serine--tRNA ligase, found in Brachyspira hyodysenteriae (strain ATCC 49526 / WA1).